The sequence spans 335 residues: NmrA-like family domain-containing oxidoreductase ptmS (335 aa).

Residues glycine 12–glutamine 17, arginine 39–serine 43, aspartate 60–glycine 61, isoleucine 81–phenylalanine 88, lysine 139, and phenylalanine 163–asparagine 166 contribute to the NADP(+) site. The segment at glycine 161–serine 206 is interaction with ASS1.

Belongs to the NmrA-type oxidoreductase family.

It functions in the pathway secondary metabolite biosynthesis. Functionally, nmrA-like family domain-containing oxidoreductase; part of the gene cluster that mediates the biosynthesis of the indole diterpenes penitrems. The geranylgeranyl diphosphate (GGPP) synthase ptmG catalyzes the first step in penitrem biosynthesis via conversion of farnesyl pyrophosphate and isopentyl pyrophosphate into geranylgeranyl pyrophosphate (GGPP). Condensation of indole-3-glycerol phosphate with GGPP by the prenyl transferase ptmC then forms 3-geranylgeranylindole (3-GGI). Epoxidation by the FAD-dependent monooxygenase ptmM leads to a epoxidized-GGI that is substrate of the terpene cyclase ptmB for cyclization to yield paspaline. Paspaline is subsequently converted to 13-desoxypaxilline by the cytochrome P450 monooxygenase ptmP, the latter being then converted to paxilline by the cytochrome P450 monooxygenase ptmQ. Paxilline is converted to beta-paxitriol via C-10 ketoreduction by the short-chain dehydrogenase ptmH which can be monoprenylated at the C-20 by the indole diterpene prenyltransferase ptmD. A two-step elimination (acetylation and elimination) process performed by the O-acetyltransferase ptmV and ptmI leads to the production of the prenylated form of penijanthine. The FAD-linked oxidoreductase ptmO then converts the prenylated form of penijanthine into PC-M5 which is in turn transformed into PC-M4 by the aromatic dimethylallyltransferase ptmE. Five sequential oxidative transformations performed by the cytochrome P450 monooxygenases ptmK, ptmU, ptmL, ptmN and ptmJ yield the various penitrem compounds. PtmK, ptmU and ptmM are involved in the formation of the key bicyclic ring of penitrem C via the formation of the intermediates secopenitrem D and penitrem D. PtmL catalyzes the epoxidation of penitrem D and C to yield penitrem B and F, respectively. PtmJ catalyzes the last benzylic hydroxylation to convert penitrem B to prenitrem E and penitrem F to penitrem A. This chain is NmrA-like family domain-containing oxidoreductase ptmS, found in Penicillium ochrochloron.